A 247-amino-acid polypeptide reads, in one-letter code: Large ribosomal subunit protein uL24m (247 aa).

The region spanning 84 to 117 is the KOW domain; sequence FFRGDRIEVLVGKDKGKQGIVTQVIPERNWVIVE.

It belongs to the universal ribosomal protein uL24 family. Component of the mitochondrial ribosome large subunit (39S) which comprises a 16S rRNA and about 50 distinct proteins.

The protein resides in the mitochondrion. The sequence is that of Large ribosomal subunit protein uL24m (mRpL24) from Drosophila pseudoobscura pseudoobscura (Fruit fly).